A 432-amino-acid chain; its full sequence is Adenylosuccinate synthetase (432 aa).

GTP contacts are provided by residues 13-19 and 41-43; these read GDEGKGK and GHT. Asp-14 (proton acceptor) is an active-site residue. 2 residues coordinate Mg(2+): Asp-14 and Gly-41. IMP is bound by residues 14 to 17, 39 to 42, Thr-130, Arg-144, Gln-225, Thr-240, and Arg-304; these read DEGK and NAGH. His-42 acts as the Proton donor in catalysis. Residue 300-306 coordinates substrate; the sequence is ATTGRRR. Residues Arg-306, 332-334, and 415-417 each bind GTP; these read KLD and STG.

The protein belongs to the adenylosuccinate synthetase family. Homodimer. It depends on Mg(2+) as a cofactor.

It is found in the cytoplasm. The catalysed reaction is IMP + L-aspartate + GTP = N(6)-(1,2-dicarboxyethyl)-AMP + GDP + phosphate + 2 H(+). It functions in the pathway purine metabolism; AMP biosynthesis via de novo pathway; AMP from IMP: step 1/2. In terms of biological role, plays an important role in the de novo pathway of purine nucleotide biosynthesis. Catalyzes the first committed step in the biosynthesis of AMP from IMP. The chain is Adenylosuccinate synthetase from Salmonella arizonae (strain ATCC BAA-731 / CDC346-86 / RSK2980).